Reading from the N-terminus, the 218-residue chain is Protein-L-isoaspartate O-methyltransferase (218 aa).

Residue S52 is part of the active site.

The protein belongs to the methyltransferase superfamily. L-isoaspartyl/D-aspartyl protein methyltransferase family.

The protein resides in the cytoplasm. It catalyses the reaction [protein]-L-isoaspartate + S-adenosyl-L-methionine = [protein]-L-isoaspartate alpha-methyl ester + S-adenosyl-L-homocysteine. Catalyzes the methyl esterification of L-isoaspartyl residues in peptides and proteins that result from spontaneous decomposition of normal L-aspartyl and L-asparaginyl residues. It plays a role in the repair and/or degradation of damaged proteins. This chain is Protein-L-isoaspartate O-methyltransferase, found in Rhodopseudomonas palustris (strain ATCC BAA-98 / CGA009).